The following is a 239-amino-acid chain: Probable septum site-determining protein MinC (239 aa).

It belongs to the MinC family. As to quaternary structure, interacts with MinD and FtsZ.

Its function is as follows. Cell division inhibitor that blocks the formation of polar Z ring septums. Rapidly oscillates between the poles of the cell to destabilize FtsZ filaments that have formed before they mature into polar Z rings. Prevents FtsZ polymerization. The protein is Probable septum site-determining protein MinC of Colwellia psychrerythraea (strain 34H / ATCC BAA-681) (Vibrio psychroerythus).